The chain runs to 222 residues: Putative germin-like protein subfamily 1 member 9 (222 aa).

An N-terminal signal peptide occupies residues 1–22; the sequence is MKSFSFLAVLSILAITLSLSKA. The cysteines at positions 32 and 49 are disulfide-linked. The region spanning 63-213 is the Cupin type-1 domain; sequence TGLHEARPPN…AFQVDPKIVM (151 aa). N-linked (GlcNAc...) asparagine glycosylation occurs at Asn78. 4 residues coordinate Mn(2+): His111, His113, Glu118, and His159.

Belongs to the germin family. Oligomer (believed to be a pentamer but probably hexamer).

The protein localises to the secreted. It localises to the extracellular space. The protein resides in the apoplast. Functionally, may play a role in plant defense. Probably has no oxalate oxidase activity even if the active site is conserved. The polypeptide is Putative germin-like protein subfamily 1 member 9 (Arabidopsis thaliana (Mouse-ear cress)).